Reading from the N-terminus, the 322-residue chain is MKKETKPRVVVIGGGTGLPVILKGLKKKDIHLTAIVTVADDGGSSGKIREQMDVLPPGDIRNVMLALSNVDPRVVDLFQYRFAVDGDLSGHVIGNLILTALSQLNDSYVDAINVLATVLKIRGKVIPATDQPLILNAEMEDGSIVHGESLIPLQGKHINRVYIEPENVKPYPTAVEAVKEADLIVIGPGSLYTSILPNLLLTELADEITASKAPKVYITNILTQIGETDFFSDADHIKVIHEHVGKSFIDKTLINTTTVPKELLFPEDVAQVEHNAKGMEELGVEAIYQDFLSTEDGLVRHAAEKVADALLAMLPNQTNEKE.

It belongs to the gluconeogenesis factor family.

It localises to the cytoplasm. Its function is as follows. Required for morphogenesis under gluconeogenic growth conditions. This chain is Gluconeogenesis factor, found in Listeria monocytogenes serovar 1/2a (strain ATCC BAA-679 / EGD-e).